We begin with the raw amino-acid sequence, 130 residues long: WAP four-disulfide core domain protein 3 (130 aa).

An N-terminal signal peptide occupies residues M1–A16. WAP domains are found at residues G17–I61 and E62–L106. Cystine bridges form between C25-C49, C32-C53, C36-C48, C42-C57, C69-C94, C77-C98, C81-C93, and C87-C102. A glycan (N-linked (GlcNAc...) asparagine) is linked at N116.

It is found in the secreted. In Mus musculus (Mouse), this protein is WAP four-disulfide core domain protein 3 (Wfdc3).